The sequence spans 591 residues: Aspartate--tRNA ligase (591 aa).

Glutamate 171 contacts L-aspartate. An aspartate region spans residues 195–198 (QLFK). Residue arginine 217 participates in L-aspartate binding. ATP is bound by residues 217–219 (RDE) and glutamine 226. Residue histidine 448 coordinates L-aspartate. ATP is bound at residue glutamate 482. Arginine 489 provides a ligand contact to L-aspartate. 534-537 (GLDR) lines the ATP pocket.

Belongs to the class-II aminoacyl-tRNA synthetase family. Type 1 subfamily. As to quaternary structure, homodimer.

It localises to the cytoplasm. The enzyme catalyses tRNA(Asp) + L-aspartate + ATP = L-aspartyl-tRNA(Asp) + AMP + diphosphate. Its function is as follows. Catalyzes the attachment of L-aspartate to tRNA(Asp) in a two-step reaction: L-aspartate is first activated by ATP to form Asp-AMP and then transferred to the acceptor end of tRNA(Asp). This is Aspartate--tRNA ligase from Aliivibrio salmonicida (strain LFI1238) (Vibrio salmonicida (strain LFI1238)).